The sequence spans 271 residues: Murein DD-endopeptidase MepH (271 aa).

The N-terminal stretch at 1–27 is a signal peptide; sequence MARINRISITLCALLFTTLPLTPMAHA. Positions 27-102 are disordered; it reads ASKQARESSA…KHAVNKTASA (76 aa). The span at 55–64 shows a compositional bias: basic residues; it reads KTQKTAKKAA. Low complexity predominate over residues 65 to 86; sequence SKSTTKSKTASSVKKSSITASK. Residues 138-265 enclose the NlpC/P60 domain; it reads QKATKVAMNK…RHYVGARRVM (128 aa). C169 functions as the Nucleophile in the catalytic mechanism. The active-site Proton acceptor is the H224. Q236 is a catalytic residue.

Belongs to the peptidase C40 family.

Its pathway is cell wall biogenesis; cell wall polysaccharide biosynthesis. Functionally, a murein DD-endopeptidase with specificity for D-Ala-meso-diaminopimelic acid (mDAP) cross-links. Its role is probably to cleave D-Ala-mDAP cross-links to allow insertion of new glycans and thus cell wall expansion. Functionally redundant with MepM and MepH. Partially suppresses an mepS disruption mutant. This Escherichia coli (strain K12) protein is Murein DD-endopeptidase MepH (mepH).